Consider the following 367-residue polypeptide: Pantothenate kinase CAB1 (367 aa).

Belongs to the type II pantothenate kinase family.

The protein resides in the cytoplasm. Its subcellular location is the nucleus. It carries out the reaction (R)-pantothenate + ATP = (R)-4'-phosphopantothenate + ADP + H(+). The protein operates within cofactor biosynthesis; coenzyme A biosynthesis; CoA from (R)-pantothenate: step 1/5. Its activity is regulated as follows. Regulated by feedback inhibition by malonyl-CoA. Its function is as follows. Plays a role in the physiological regulation of the intracellular CoA concentration. The protein is Pantothenate kinase CAB1 (CAB1) of Saccharomyces cerevisiae (strain ATCC 204508 / S288c) (Baker's yeast).